Reading from the N-terminus, the 1684-residue chain is GRIP and coiled-coil domain-containing protein 2 (1684 aa).

M1 bears the N-acetylmethionine mark. A disordered region spans residues 1–22 (MEDLVQDGVASPATPGTGKSKL). S11 is subject to Phosphoserine. The residue at position 14 (T14) is a Phosphothreonine. A coiled-coil region spans residues 110–1618 (VTKMGDAHKE…REKSAANLEY (1509 aa)). Phosphoserine occurs at positions 236, 1483, and 1487. The disordered stretch occupies residues 1475 to 1502 (LKNEPTTRSPVSSQQSLKNLRERRNTDL). A compositionally biased stretch (polar residues) spans 1477-1492 (NEPTTRSPVSSQQSLK). The mediates interaction with RAB6A stretch occupies residues 1574–1613 (HLNGLLRETEATNAILMEQIKLLKSEIRRLERNQEREKSA). The tract at residues 1574–1684 (HLNGLLRETE…SYLHSWSGLR (111 aa)) is mediates interaction with RAB9A. A GRIP domain is found at 1609 to 1659 (REKSAANLEYLKNVLLQFIFLKPGSERERLLPVINTMLQLSPEEKGKLAAV).

In terms of assembly, homodimer. Interacts (via GRIP domain) with RAB6A (preferentially in its GTP-bound form). May interact (RAB6A-dependent) with ARL1; according to PubMed:19703403, RAB6A and ARL1 are not involved in GCC2 Golgi localization as proposed by PubMed:18243103. Interacts (probably via GRIP domain) with RAB9A (preferentially in its GTP-bound form). Interacts with CLASP1 and CLASP2; recruits both proteins to membranes of the TGN. Interacts with STX16. Ubiquitous.

The protein localises to the cytoplasm. Its subcellular location is the golgi apparatus. It localises to the trans-Golgi network membrane. In terms of biological role, golgin which probably tethers transport vesicles to the trans-Golgi network (TGN) and regulates vesicular transport between the endosomes and the Golgi. As a RAB9A effector it is involved in recycling of the mannose 6-phosphate receptor from the late endosomes to the TGN. May also play a role in transport between the recycling endosomes and the Golgi. Required for maintenance of the Golgi structure, it is involved in the biogenesis of noncentrosomal, Golgi-associated microtubules through recruitment of CLASP1 and CLASP2. The chain is GRIP and coiled-coil domain-containing protein 2 (GCC2) from Homo sapiens (Human).